The primary structure comprises 306 residues: MWCPSVSLSLWANAWLAGKASAPTSLRRVIVWAPKQSVTAYDAVAAGHTGLPWPDVHDAGTVTLLQTARHDRRAGGLRTDARTINVVLPVPGDVRGLAPGTQFEQDALAAGEAVIVSNPHQPGAAVGLVPEFCYADDDDGSQDYALTELCALSWTVYSLPGAPVLDHHELGDASYTLRSAVRSAAETLGAIGLGSAASDVDDPRGLVQQLLESARQHRIPDQPPSPLRVLENRAHVDAIIAVSAGLSRSDSPDRFAAPIAAGLEPLGTQSSSEARIAGDPVRPLTAVVRSARMAAVTAILHSAWGD.

The protein to M.tuberculosis Rv1486c, M.bovis Mb1522c and M.leprae ML1804.

This is an uncharacterized protein from Mycobacterium avium.